Here is a 353-residue protein sequence, read N- to C-terminus: MTAILERRESASVWGRFCNWITSTENRLYIGWFGVLMIPTLLTATSVFIIAFIAAPPVDIDGIREPVAGSLLYGNNIISGAIIPTSAAIGLHFYPIWEASSVDEWLYNGGPYELIVLHFLLGVACYMGREWELSFRLGMRPWIAVAYSAPVAAATAVFLIYPIGQGSFSDGMPLGISGTFNFMIVFQAEHNILMHPFHMLGVAGVFGGSLFSAMHGSLVTSSLIRETTESESANAGYKFGQEEETYNIVAAHGYFGRLIFQYASFNNSRSLHFFLAAWPVVGIWFTALGISTMAFNLNGFNFNQSVVDSQGRVINTWADIINRANLGMEVMHERNAHNFPLDLASVELDSIDG.

T2 carries the N-acetylthreonine modification. T2 is subject to Phosphothreonine. 3 consecutive transmembrane segments (helical) span residues Y29–S46, H118–L133, and W142–A156. H118 lines the chlorophyll a pocket. Y126 contacts pheophytin a. Positions 170 and 189 each coordinate [CaMn4O5] cluster. Residues F197 to L218 form a helical membrane-spanning segment. H198 contributes to the chlorophyll a binding site. Residues H215 and S264–F265 contribute to the a quinone site. Residue H215 coordinates Fe cation. H272 contributes to the Fe cation binding site. A helical transmembrane segment spans residues F274–L288. [CaMn4O5] cluster-binding residues include H332, E333, D342, and A344. A propeptide spanning residues S345–G353 is cleaved from the precursor.

This sequence belongs to the reaction center PufL/M/PsbA/D family. PSII is composed of 1 copy each of membrane proteins PsbA, PsbB, PsbC, PsbD, PsbE, PsbF, PsbH, PsbI, PsbJ, PsbK, PsbL, PsbM, PsbT, PsbX, PsbY, PsbZ, Psb30/Ycf12, at least 3 peripheral proteins of the oxygen-evolving complex and a large number of cofactors. It forms dimeric complexes. The D1/D2 heterodimer binds P680, chlorophylls that are the primary electron donor of PSII, and subsequent electron acceptors. It shares a non-heme iron and each subunit binds pheophytin, quinone, additional chlorophylls, carotenoids and lipids. D1 provides most of the ligands for the Mn4-Ca-O5 cluster of the oxygen-evolving complex (OEC). There is also a Cl(-1) ion associated with D1 and D2, which is required for oxygen evolution. The PSII complex binds additional chlorophylls, carotenoids and specific lipids. is required as a cofactor. Tyr-161 forms a radical intermediate that is referred to as redox-active TyrZ, YZ or Y-Z. In terms of processing, C-terminally processed by CTPA; processing is essential to allow assembly of the oxygen-evolving complex and thus photosynthetic growth.

Its subcellular location is the plastid. The protein localises to the chloroplast thylakoid membrane. The enzyme catalyses 2 a plastoquinone + 4 hnu + 2 H2O = 2 a plastoquinol + O2. In terms of biological role, photosystem II (PSII) is a light-driven water:plastoquinone oxidoreductase that uses light energy to abstract electrons from H(2)O, generating O(2) and a proton gradient subsequently used for ATP formation. It consists of a core antenna complex that captures photons, and an electron transfer chain that converts photonic excitation into a charge separation. The D1/D2 (PsbA/PsbD) reaction center heterodimer binds P680, the primary electron donor of PSII as well as several subsequent electron acceptors. This is Photosystem II protein D1 from Gnetum parvifolium (Small-leaved jointfir).